The primary structure comprises 303 residues: GTP cyclohydrolase FolE2 (303 aa).

Belongs to the GTP cyclohydrolase IV family.

The enzyme catalyses GTP + H2O = 7,8-dihydroneopterin 3'-triphosphate + formate + H(+). It functions in the pathway cofactor biosynthesis; 7,8-dihydroneopterin triphosphate biosynthesis; 7,8-dihydroneopterin triphosphate from GTP: step 1/1. In terms of biological role, converts GTP to 7,8-dihydroneopterin triphosphate. The chain is GTP cyclohydrolase FolE2 from Exiguobacterium sp. (strain ATCC BAA-1283 / AT1b).